A 189-amino-acid polypeptide reads, in one-letter code: HGPRTase-like protein 1 (189 aa).

Belongs to the purine/pyrimidine phosphoribosyltransferase family. Archaeal HPRT subfamily.

May catalyze a purine salvage reaction, the substrate is unknown. The protein is HGPRTase-like protein 1 of Natrialba magadii (strain ATCC 43099 / DSM 3394 / CCM 3739 / CIP 104546 / IAM 13178 / JCM 8861 / NBRC 102185 / NCIMB 2190 / MS3) (Natronobacterium magadii).